The sequence spans 876 residues: MSKSTAEIRQAFLDFFHSKGHQVVASSSLVPHNDPTLLFTNAGMNQFKDVFLGLDKRNYSRATTSQRCVRAGGKHNDLENVGYTARHHTFFEMLGNFSFGDYFKHDAIQFAWELLTSEKWFALPKERLWVTVYESDDEAYEIWEKEVGIPRERIIRIGDNKGAPYASDNFWQMGDTGPCGPCTEIFYDHGDHIWGGPPGSPEEDGDRYIEIWNIVFMQFNRQADGTMEPLPKPSVDTGMGLERIAAVLQHVNSNYDIDLFRTLIQAVAKVTGATDLSNKSLRVIADHIRSCAFLIADGVMPSNENRGYVLRRIIRRAVRHGNMLGAKETFFYKLVGPLIDVMGSAGEDLKRQQAQVEQVLKTEEEQFARTLERGLALLDEELAKLSGDTLDGETAFRLYDTYGFPVDLTADVCRERNIKVDEAGFEAAMEEQRRRAREASGFGADYNAMIRVDSASEFKGYDHLELNGKVTALFVDGKAVDAINAGQEAVVVLDQTPFYAESGGQVGDKGELKGANFSFVVEDTQKYGQAIGHIGKLAAGSLKVGDAVQADVDEARRARIRLNHSATHLMHAALRQVLGTHVSQKGSLVNDKVLRFDFSHNEAMKPEEIRAVEDLVNAQIRRNLPIETNIMDLEAAKAKGAMALFGEKYDERVRVLSMGDFSTELCGGTHASRTGDIGLFRIISESGTAAGVRRIEAVTGEGAITTVHADSDRLSEVAHLLKGDSNNLADKVRSVLERTRQLEKELQQLKEQAAAQESANLSSKAIDVNGVKLLVSELSGVEPKMLRTMVDDLKNQLGSTIIVLATVAEGKVSLIAGVSKDVTDRVKAGELIGMVAQQVGGKGGGRPDMAQAGGTDAAALPAALASVKGWVSAKLQ.

Lys-74 is subject to N6-acetyllysine. Zn(2+)-binding residues include His-564, His-568, Cys-666, and His-670.

This sequence belongs to the class-II aminoacyl-tRNA synthetase family. As to quaternary structure, homotetramer. The cofactor is Zn(2+).

It is found in the cytoplasm. The enzyme catalyses tRNA(Ala) + L-alanine + ATP = L-alanyl-tRNA(Ala) + AMP + diphosphate. Catalyzes the attachment of alanine to tRNA(Ala) in a two-step reaction: alanine is first activated by ATP to form Ala-AMP and then transferred to the acceptor end of tRNA(Ala). Also edits incorrectly charged Ser-tRNA(Ala) and Gly-tRNA(Ala) via its editing domain. The sequence is that of Alanine--tRNA ligase from Escherichia coli O157:H7.